The sequence spans 310 residues: Porphobilinogen deaminase (310 aa).

Cys242 bears the S-(dipyrrolylmethanemethyl)cysteine mark.

Belongs to the HMBS family. As to quaternary structure, monomer. Dipyrromethane serves as cofactor.

It carries out the reaction 4 porphobilinogen + H2O = hydroxymethylbilane + 4 NH4(+). Its pathway is porphyrin-containing compound metabolism; protoporphyrin-IX biosynthesis; coproporphyrinogen-III from 5-aminolevulinate: step 2/4. Functionally, tetrapolymerization of the monopyrrole PBG into the hydroxymethylbilane pre-uroporphyrinogen in several discrete steps. The chain is Porphobilinogen deaminase from Shewanella baltica (strain OS195).